We begin with the raw amino-acid sequence, 717 residues long: Scinderin (717 aa).

The interval 1–363 (MAPERHPPAF…DGFGKVYVTE (363 aa)) is actin-severing. One copy of the Gelsolin-like 1 repeat lies at 28–108 (ELVPVPPSRH…IQGYESNEFV (81 aa)). A 1,2-diacyl-sn-glycero-3-phospho-(1D-myo-inositol-4,5-bisphosphate)-binding positions include 112-119 (KGGIKYKA) and 138-146 (RLLHIKGRR). Gelsolin-like repeat units follow at residues 148–220 (VRAT…PDEL), 265–340 (VVAE…TPIF), 408–483 (RVPV…PHLL), 526–590 (AEVD…EEFW), and 628–703 (IEEV…PPTF). Positions 364-715 (RVAKIEQIEF…WFLAWDSNKW (352 aa)) are ca(2+)-dependent actin binding. Residues N538, D539, E562, D643, D644, and E666 each contribute to the Ca(2+) site.

The protein belongs to the villin/gelsolin family.

The protein resides in the cytoplasm. It localises to the cytoskeleton. Its subcellular location is the cell projection. The protein localises to the podosome. Functionally, ca(2+)-dependent actin filament-severing protein that has a regulatory function in exocytosis by affecting the organization of the microfilament network underneath the plasma membrane. In vitro, also has barbed end capping and nucleating activities in the presence of Ca(2+). Severing activity is inhibited by phosphatidylinositol 4,5-bis-phosphate (PIP2). Required for megakaryocyte differentiation, maturation, polyploidization and apoptosis with the release of platelet-like particles. Plays a role in osteoclastogenesis (OCG) and actin cytoskeletal organization in osteoclasts. Regulates chondrocyte proliferation and differentiation. Inhibits cell proliferation and tumorigenesis. Signaling is mediated by MAPK, p38 and JNK pathways. This Gallus gallus (Chicken) protein is Scinderin (SCIN).